Consider the following 169-residue polypeptide: UPF0065 protein in clcB-clcD intergenic region (169 aa).

It belongs to the UPF0065 (bug) family.

It localises to the periplasm. This is UPF0065 protein in clcB-clcD intergenic region from Pseudomonas knackmussii (strain DSM 6978 / CCUG 54928 / LMG 23759 / B13).